We begin with the raw amino-acid sequence, 367 residues long: Inactive serine protease 39 (367 aa).

The signal sequence occupies residues 1–31; the sequence is MWGSRAQQSGPDRGGACLLAAFLLCFSLLHA. One can recognise a Peptidase S1 domain in the interval 68–312; it reads IYGGQIAKAE…FSDWIKQKKA (245 aa). 4 disulfide bridges follow: Cys93-Cys109, Cys192-Cys269, Cys225-Cys248, and Cys259-Cys287.

Belongs to the peptidase S1 family. In terms of tissue distribution, expressed in testis. More specifically, abundantly expressed in the haploid round spermatid.

It localises to the cytoplasmic vesicle. The protein resides in the secretory vesicle. It is found in the acrosome. Its subcellular location is the secreted. Functionally, may play an important role in the sperm/egg interaction; released during the acrosome reaction. The protein is Inactive serine protease 39 (Prss39) of Mus musculus (Mouse).